Reading from the N-terminus, the 1426-residue chain is B-cell CLL/lymphoma 9 protein (1426 aa).

Polar residues-rich tracts occupy residues 1-21 (MHSS…SSPK) and 34-46 (MSPS…DSKF). The segment at 1-173 (MHSSNPKVRS…TEPTPAQKTP (173 aa)) is disordered. Residues 47–62 (SNQGKQGGSASQSQPS) are compositionally biased toward low complexity. A compositionally biased stretch (gly residues) spans 78 to 94 (GPGGSMGLKNGAGNGAK). Composition is skewed to basic and acidic residues over residues 100–112 (ERSI…DQRD) and 120–135 (SDIK…KSQD). Ser-104 is modified (phosphoserine). Residues 136 to 170 (SQHTPHSMTPSNATAPRSSTPSHGQTTATEPTPAQ) show a composition bias toward polar residues. Ser-157 is modified (phosphoserine). Position 172 is a phosphothreonine (Thr-172). The interval 177-205 (VYVFSTEMANKAAEAVLKGQVETIVSFHI) is interaction with PYGO1. The segment covering 207–226 (NISNNKTERSTAPLNTQISA) has biased composition (polar residues). Disordered regions lie at residues 207–439 (NISN…RDVP) and 597–625 (PKIP…PNPQ). 2 stretches are compositionally biased toward pro residues: residues 232–241 (KPLPQQPPAP) and 256–272 (PTPP…APPR). Residues 304–320 (GPNSTPNNRAVTPVSQG) show a composition bias toward polar residues. The residue at position 315 (Thr-315) is a Phosphothreonine. Ser-318 and Ser-352 each carry phosphoserine. Residues 355-380 (QLEHRERSLQTLRDIQRMLFPDEKEF) are compositionally biased toward basic and acidic residues. Residues 358-374 (HRERSLQTLRDIQRMLF) are interaction with CTNNB1. The segment covering 382–392 (GAQSGGPQQNP) has biased composition (polar residues). Phosphoserine is present on residues Ser-687 and Ser-689. The interval 787–895 (MSQGPGSNSG…PQTPSQLAGM (109 aa)) is disordered. Arg-801 is subject to Asymmetric dimethylarginine. The segment covering 823–836 (NPSSNPTSLNTAPP) has biased composition (low complexity). Lys-844 bears the N6-acetyllysine mark. Over residues 867–891 (TMHQVQSPMLGSPSGNLKSPQTPSQ) the composition is skewed to polar residues. A phosphoserine mark is found at Ser-907 and Ser-917. Disordered stretches follow at residues 910 to 1002 (VLGS…PTLS), 1032 to 1052 (VASS…SMNN), 1152 to 1203 (PFPH…GPDS), and 1253 to 1275 (PRGE…HMQG). Residues 937–947 (PKPPLQSPGIP) are compositionally biased toward pro residues. Residues 1158–1176 (PSGGQGSFPGGMGFPGEGP) show a composition bias toward gly residues.

This sequence belongs to the BCL9 family. As to quaternary structure, binds to beta-catenin (CTNNB1), PYGO1 and PYGO2; the interaction with PYGO1 increases PYGO1 affinity to histone H3 methylated at 'Lys 4'. In terms of tissue distribution, detected at low levels in thymus, prostate, testis, ovary and small intestine, and at lower levels in spleen, colon and blood.

The protein resides in the nucleus. Involved in signal transduction through the Wnt pathway. Promotes beta-catenin's transcriptional activity. The sequence is that of B-cell CLL/lymphoma 9 protein (BCL9) from Homo sapiens (Human).